The following is a 249-amino-acid chain: 5'-nucleotidase SurE (249 aa).

A divalent metal cation is bound by residues D8, D9, S39, and N91.

Belongs to the SurE nucleotidase family. A divalent metal cation is required as a cofactor.

It is found in the cytoplasm. It catalyses the reaction a ribonucleoside 5'-phosphate + H2O = a ribonucleoside + phosphate. Functionally, nucleotidase that shows phosphatase activity on nucleoside 5'-monophosphates. The sequence is that of 5'-nucleotidase SurE from Haemophilus influenzae (strain 86-028NP).